A 430-amino-acid chain; its full sequence is Glutamate-1-semialdehyde 2,1-aminomutase (430 aa).

Lys265 carries the N6-(pyridoxal phosphate)lysine modification.

The protein belongs to the class-III pyridoxal-phosphate-dependent aminotransferase family. HemL subfamily. Homodimer. Requires pyridoxal 5'-phosphate as cofactor.

The protein resides in the cytoplasm. The enzyme catalyses (S)-4-amino-5-oxopentanoate = 5-aminolevulinate. It functions in the pathway porphyrin-containing compound metabolism; protoporphyrin-IX biosynthesis; 5-aminolevulinate from L-glutamyl-tRNA(Glu): step 2/2. This chain is Glutamate-1-semialdehyde 2,1-aminomutase, found in Shewanella sp. (strain MR-7).